Here is a 419-residue protein sequence, read N- to C-terminus: DNA ligase (419 aa).

The NTD stretch occupies residues 1–120 (MLNQFPGQYS…ARQKRGAHTN (120 aa)). Positions 121–317 (RGMIPPMLVK…NYHSAHLAKL (197 aa)) are AD domain. Residues Gln149, Lys151, Glu203, and Phe232 each contribute to the ATP site. Lys151 acts as the N6-AMP-lysine intermediate in catalysis. A divalent metal cation is bound at residue Glu203. Position 291 (Glu291) interacts with a divalent metal cation. Residues Ile294 and Lys316 each contribute to the ATP site. The segment at 318–419 (KPLLDAEFIL…REPINVLEII (102 aa)) is OB domain.

This sequence belongs to the ATP-dependent DNA ligase family. It depends on a divalent metal cation as a cofactor.

The protein localises to the virion. The enzyme catalyses ATP + (deoxyribonucleotide)n-3'-hydroxyl + 5'-phospho-(deoxyribonucleotide)m = (deoxyribonucleotide)n+m + AMP + diphosphate.. Functionally, very low-fidelity DNA ligase that seals nicks in double-stranded DNA during DNA repair. Together with the viral repair DNA polymerase X, fills the single nucleotide gaps generated by the AP endonuclease. It is not essential for viral replication and recombination. Displays a very low adenylation activity towards DNA with 3'-dideoxy- or 3'-amino-terminated nicks compared to regular nick DNA. The sequence is that of DNA ligase (LIG) from Ornithodoros (relapsing fever ticks).